The primary structure comprises 86 residues: Short neurotoxin homolog NTL4 (86 aa).

Positions 1–21 (MKTLLLTLVVVTIICLDLGYT) are cleaved as a signal peptide. Cystine bridges form between Cys24–Cys45, Cys38–Cys63, Cys67–Cys78, and Cys79–Cys84.

The protein belongs to the three-finger toxin family. Short-chain subfamily. Orphan group III sub-subfamily. Expressed by the venom gland.

It localises to the secreted. This is Short neurotoxin homolog NTL4 from Bungarus multicinctus (Many-banded krait).